A 194-amino-acid polypeptide reads, in one-letter code: Cysteine and glycine-rich protein 3 (194 aa).

An interaction with TCAP region spans residues 1–5 (MPNWG). One can recognise an LIM zinc-binding 1 domain in the interval 10–61 (CGACEKTVYHAEEIQCNGRSFHKTCFHCMACRKALDSTTVAAHESEIYCKVC). Positions 64 to 69 (RRYGPK) match the Nuclear localization signal motif. An interaction with CLF2 and isoform 2 region spans residues 94-105 (QSPKPARSVTTS). Phosphoserine occurs at positions 95 and 153. An LIM zinc-binding 2 domain is found at 120–171 (CPRCGKSVYAAEKVMGGGKPWHKTCFRCAICGKSLESTNVTDKDGELYCKVC).

As to quaternary structure, self-associates. Oligomeric in the cytoplasm and monomeric in the nucleus. Homooligomers preferentially form along the actin cytoskeleton. Isoform 2 interacts with isoform 1. Isoform 1 but not isoform 2 interacts with MYOD1 and MYOG. Isoform 1 interacts with TCAP, ACTN2 and NRAP. Isoform 2 interacts with TCAP and alpha-actinin. Interacts with LDHD. Interacts (via N-terminus)with GLRX3 (via C-terminus) and PPP3CA; GLRX3 and calcineurin compete for interaction with CSRP3. Interacts with MYF6. Interacts with CFL2; the stoichiometry influences F-actin depolymerization and possibly two molecules of CFL2 can interact with one molecule of CSRP3 resulting in the highest functional impact; the interaction is stronger with phosphorylated CFL2. In terms of processing, phosphorylated by PKC/PRKCA. Cardiac and slow-twitch skeletal muscles. Isoform 2 is expressed in striated muscle. Isoform 2 is specifically expressed at higher levels in patients with neuromuscular diseases, such as limb-girdle muscular dystrophy 2A (LGMD2A), Duchenne muscular dystrophy (DMD) and dermatomyositis.

Its subcellular location is the nucleus. It is found in the cytoplasm. The protein resides in the cytoskeleton. It localises to the myofibril. The protein localises to the sarcomere. Its subcellular location is the z line. Its function is as follows. Positive regulator of myogenesis. Acts as a cofactor for myogenic bHLH transcription factors such as MYOD1, and probably MYOG and MYF6. Enhances the DNA-binding activity of the MYOD1:TCF3 isoform E47 complex and may promote formation of a functional MYOD1:TCF3 isoform E47:MEF2A complex involved in myogenesis. Plays a crucial and specific role in the organization of cytosolic structures in cardiomyocytes. Could play a role in mechanical stretch sensing. May be a scaffold protein that promotes the assembly of interacting proteins at Z-line structures. It is essential for calcineurin anchorage to the Z line. Required for stress-induced calcineurin-NFAT activation. The role in regulation of cytoskeleton dynamics by association with CFL2 is reported conflictingly: Shown to enhance CFL2-mediated F-actin depolymerization dependent on the CSRP3:CFL2 molecular ratio, and also shown to reduce the ability of CLF1 and CFL2 to enhance actin depolymerization. Proposed to contribute to the maintenance of muscle cell integrity through an actin-based mechanism. Can directly bind to actin filaments, cross-link actin filaments into bundles without polarity selectivity and protect them from dilution- and cofilin-mediated depolymerization; the function seems to involve its self-association. In vitro can inhibit PKC/PRKCA activity. Proposed to be involved in cardiac stress signaling by down-regulating excessive PKC/PRKCA signaling. May play a role in early sarcomere organization. Overexpression in myotubes negatively regulates myotube differentiation. By association with isoform 1 and thus changing the CSRP3 isoform 1:CFL2 stoichiometry is proposed to down-regulate CFL2-mediated F-actin depolymerization. The sequence is that of Cysteine and glycine-rich protein 3 (CSRP3) from Homo sapiens (Human).